The chain runs to 404 residues: Ubiquitin-like modifier-activating enzyme 5 (404 aa).

ATP-binding residues include glycine 83, aspartate 104, lysine 127, asparagine 150, and asparagine 184. Residues cysteine 226 and cysteine 229 each contribute to the Zn(2+) site. The active-site Glycyl thioester intermediate is the cysteine 250. Residues cysteine 303 and cysteine 308 each coordinate Zn(2+). The segment at 372–404 is disordered; that stretch reads APEKSSETSEETVSAATADETSLEDLMAQMKSM. The span at 382-391 shows a compositional bias: low complexity; that stretch reads ETVSAATADE.

It belongs to the ubiquitin-activating E1 family. UBA5 subfamily. In terms of assembly, interacts (via C-terminus) with Ufc1. Interacts with Ufm1.

Its subcellular location is the cytoplasm. The protein resides in the nucleus. It is found in the golgi apparatus. Its function is as follows. E1-like enzyme which activates UFM1. This chain is Ubiquitin-like modifier-activating enzyme 5, found in Drosophila melanogaster (Fruit fly).